The chain runs to 98 residues: Bombyxin E-1 (98 aa).

An N-terminal signal peptide occupies residues 1-19; it reads MNRPVFLVLLLTGFLCIAA. Residue glutamine 20 is modified to Pyrrolidone carboxylic acid. 3 disulfide bridges follow: cysteine 29/cysteine 85, cysteine 41/cysteine 98, and cysteine 84/cysteine 89. The propeptide at 50-75 is c peptide like; sequence SESSLASYSSRGWPWLPTPNFNKRAI.

The protein belongs to the insulin family. Heterodimer of a B chain and an A chain linked by two disulfide bonds.

It is found in the secreted. In terms of biological role, PTTH is a brain peptide responsible for activation of prothoracic glands to produce ecdysone in insects. The polypeptide is Bombyxin E-1 (BBXE1) (Bombyx mori (Silk moth)).